A 289-amino-acid polypeptide reads, in one-letter code: ATP synthase subunit a (289 aa).

The next 6 membrane-spanning stretches (helical) occupy residues 43-63 (AFHLDTLGWSVALGLIFLLIF), 104-124 (IAPLALTIFVWVFLMNAVDLI), 160-180 (FCVFALIIFYSIKVKGLGGFI), 193-213 (IFVQILLIPVNFLLEFVTLIA), 232-252 (VFILIAVMFGSGLLWLSGLGV), and 259-279 (AVFHILIITLQAFIFMMLTIV).

This sequence belongs to the ATPase A chain family. As to quaternary structure, F-type ATPases have 2 components, CF(1) - the catalytic core - and CF(0) - the membrane proton channel. CF(1) has five subunits: alpha(3), beta(3), gamma(1), delta(1), epsilon(1). CF(0) has three main subunits: a(1), b(2) and c(9-12). The alpha and beta chains form an alternating ring which encloses part of the gamma chain. CF(1) is attached to CF(0) by a central stalk formed by the gamma and epsilon chains, while a peripheral stalk is formed by the delta and b chains.

Its subcellular location is the cell inner membrane. In terms of biological role, key component of the proton channel; it plays a direct role in the translocation of protons across the membrane. This chain is ATP synthase subunit a, found in Pseudomonas putida (strain ATCC 47054 / DSM 6125 / CFBP 8728 / NCIMB 11950 / KT2440).